A 160-amino-acid chain; its full sequence is Small ribosomal subunit protein uS7 (160 aa).

This sequence belongs to the universal ribosomal protein uS7 family. As to quaternary structure, part of the 30S ribosomal subunit. Contacts proteins S9 and S11.

Functionally, one of the primary rRNA binding proteins, it binds directly to 16S rRNA where it nucleates assembly of the head domain of the 30S subunit. Is located at the subunit interface close to the decoding center, probably blocks exit of the E-site tRNA. This is Small ribosomal subunit protein uS7 from Hydrogenobaculum sp. (strain Y04AAS1).